A 1434-amino-acid polypeptide reads, in one-letter code: DNA-directed RNA polymerase subunit beta' (1434 aa).

4 residues coordinate Zn(2+): Cys-70, Cys-72, Cys-85, and Cys-88. Residues Asp-460, Asp-462, and Asp-464 each coordinate Mg(2+). Zn(2+) is bound by residues Cys-840, Cys-915, Cys-922, and Cys-925.

Belongs to the RNA polymerase beta' chain family. The RNAP catalytic core consists of 2 alpha, 1 beta, 1 beta' and 1 omega subunit. When a sigma factor is associated with the core the holoenzyme is formed, which can initiate transcription. Requires Mg(2+) as cofactor. Zn(2+) serves as cofactor.

It catalyses the reaction RNA(n) + a ribonucleoside 5'-triphosphate = RNA(n+1) + diphosphate. Functionally, DNA-dependent RNA polymerase catalyzes the transcription of DNA into RNA using the four ribonucleoside triphosphates as substrates. This is DNA-directed RNA polymerase subunit beta' from Aeromonas hydrophila subsp. hydrophila (strain ATCC 7966 / DSM 30187 / BCRC 13018 / CCUG 14551 / JCM 1027 / KCTC 2358 / NCIMB 9240 / NCTC 8049).